A 304-amino-acid polypeptide reads, in one-letter code: Prephenate dehydratase (304 aa).

Residues arginine 3–arginine 178 enclose the Prephenate dehydratase domain. In terms of domain architecture, ACT spans serine 193–arginine 271.

The enzyme catalyses prephenate + H(+) = 3-phenylpyruvate + CO2 + H2O. It participates in amino-acid biosynthesis; L-phenylalanine biosynthesis; phenylpyruvate from prephenate: step 1/1. The chain is Prephenate dehydratase (pheA) from Amycolatopsis methanolica.